The sequence spans 339 residues: Pyrimidine monooxygenase RutA (339 aa).

FMN contacts are provided by residues 26–27 (IK), N92, E101, 117–118 (RY), and S167.

This sequence belongs to the NtaA/SnaA/DszA monooxygenase family. RutA subfamily.

The enzyme catalyses uracil + FMNH2 + NADH + O2 = (Z)-3-ureidoacrylate + FMN + NAD(+) + H2O + H(+). It carries out the reaction thymine + FMNH2 + NADH + O2 = (Z)-2-methylureidoacrylate + FMN + NAD(+) + H2O + H(+). In terms of biological role, catalyzes the pyrimidine ring opening between N-3 and C-4 by an unusual flavin hydroperoxide-catalyzed mechanism, adding oxygen atoms in the process to yield ureidoacrylate peracid, that immediately reacts with FMN forming ureidoacrylate and FMN-N(5)-oxide. The FMN-N(5)-oxide reacts spontaneously with NADH to produce FMN. Requires the flavin reductase RutF to regenerate FMN in vivo. The chain is Pyrimidine monooxygenase RutA from Cronobacter sakazakii (strain ATCC BAA-894) (Enterobacter sakazakii).